We begin with the raw amino-acid sequence, 122 residues long: Large ribosomal subunit protein uL14c (122 aa).

Belongs to the universal ribosomal protein uL14 family. In terms of assembly, part of the 50S ribosomal subunit.

The protein localises to the plastid. It is found in the chloroplast. Binds to 23S rRNA. This is Large ribosomal subunit protein uL14c from Jasminum nudiflorum (Winter jasmine).